Consider the following 653-residue polypeptide: MRCDRCARDTIHPIESRALDRSRILFLLCCYKRRPRFRFHVHQWWWWVAMEVPELVKLAFARVQRVEPEHVGKIFGVMLLREPDEDELVQLAYGPEATLLAKIEDTKAALTVIYARCSAAAAHGPPGGGGVGVGGGGGYHQQPQQLFSRPPVPACGGVRHHYSPAAAAAAAFGYQVQSPQYWPDSPPAPPTKAAQQEFAPPGLVVDASAEGPYPLRGGQHVLDDNNFGGGYYYPAGEDAFPNGGGGGGGSPARARRSNGLSTRRPCHYFSKGICKNGQNCHYSHHQVYQDALAGAAINGDVYNHQPGGVTPGSLETLEMEITELLNSRRGQPVSIASLPTLYGEKYGKGLQADGYLTESQRHGKAGYSLTRLLSRLNKIRVIERPHGQHSVVLAEDAAKYMDFRGGGGGGGGDTGSVPASSHQIYLTFPAESTFAEDDVANYFGQYGPVRDVRIPCQERRMFGFVSFQSPETVSTILMRRNPHFICGSRVLVKPYREKSKCVDRTCVDNIKSMVPYCPPRFFEFDQELYTAEYDASRLMRKQLAEKREMLLEMERRRATVRRLESMPPQFAYFDCSIEDASPLHSLQDDSKQLDLMNPSLASPDPLEIVSNSQAPPTQAGNIYDDHESNQIELLPESPFAASAPAGNSISTII.

A disordered region spans residues 242–261 (NGGGGGGGSPARARRSNGLS). The C3H1-type zinc finger occupies 260-287 (LSTRRPCHYFSKGICKNGQNCHYSHHQV). The HTH OST-type domain occupies 313 to 396 (SLETLEMEIT…GQHSVVLAED (84 aa)). One can recognise an RRM domain in the interval 422–497 (HQIYLTFPAE…SRVLVKPYRE (76 aa)). Residues 537-565 (RLMRKQLAEKREMLLEMERRRATVRRLES) are a coiled coil. Positions 598–623 (PSLASPDPLEIVSNSQAPPTQAGNIY) are disordered. Positions 609–620 (VSNSQAPPTQAG) are enriched in polar residues.

In Oryza sativa subsp. japonica (Rice), this protein is Zinc finger CCCH domain-containing protein 54.